A 498-amino-acid polypeptide reads, in one-letter code: Elastase (498 aa).

The signal sequence occupies residues 1-23 (MKKVSTLDLLFVAIMGVSPAAFA). Positions 24-197 (ADLIDVSKLP…VLDQWEGLAH (174 aa)) are excised as a propeptide. Cys227 and Cys255 are disulfide-bonded. Thr236 is modified (phosphothreonine). Asp333 is a binding site for Ca(2+). A Zn(2+)-binding site is contributed by His337. Residue Glu338 is part of the active site. 2 residues coordinate Zn(2+): His341 and Glu361. Ca(2+)-binding residues include Glu369, Glu372, Asp380, and Leu382. Residue His420 is the Proton donor of the active site. A disulfide bridge connects residues Cys467 and Cys494.

The protein belongs to the peptidase M4 family. The cofactor is Ca(2+). Zn(2+) is required as a cofactor. Post-translationally, made as a pre-pro-protein which is exported to the periplasm. Probably autocatalyzes cleavage of its pro-peptide. The pro-peptide can be secreted with mature elastase.

It localises to the secreted. It carries out the reaction Hydrolysis of proteins including elastin, collagen types III and IV, fibronectin and immunoglobulin A, generally with bulky hydrophobic group at P1'. Insulin B chain cleavage pattern identical to that of thermolysin, but specificity differs in other respects.. Cleaves host elastase, collagen, IgI and several complement components as well as endogenous pro-aminopeptidase, pro-chitin-binding protein (cbpD). Cleaves its own pro-peptide. Involved in the pathogenesis of P.aeruginosa infections. The protein is Elastase (lasB) of Pseudomonas aeruginosa (strain UCBPP-PA14).